A 115-amino-acid polypeptide reads, in one-letter code: Waprin-like protein (115 aa).

The N-terminal stretch at 1 to 21 is a signal peptide; sequence MNRSLLAFAIVLVLLVAGTSS. A WAP domain is found at 23 to 69; sequence LFNKSGNCPMRNTVTSCTPRCIGDGECSSNQKCCPNKCGTTSCANSS. Disulfide bonds link Cys30/Cys56, Cys39/Cys60, Cys43/Cys55, and Cys49/Cys65.

It belongs to the venom waprin family. Cys-rich waprin subfamily. As to expression, expressed by the venom gland.

The protein localises to the secreted. Its function is as follows. Antimicrobial peptides with activity against Gram-positive and Gram-negative bacteria as well as fungi. Recognizes carbohydrates in the microbial cell walls, and induces structural damage to them. Also inhibits microbial serine proteases, as well as mammalian elastases. Carbohydrates that are recognized are LPS, mannan, peptidoglycan, and N-acetl-D-glucosamine. The polypeptide is Waprin-like protein (Tetramorium bicarinatum (Tramp ant)).